A 201-amino-acid polypeptide reads, in one-letter code: MAHGPRYRVPFRRRREGKTNYHKRLALLKSGKPRLVVRKSLNHHIAQIVVYDPKGDKTIVSAHTRELMRDFGWKGHGGNTPSAYLLGLLIGYKAKKAGIDEAILDIGLHPPTRGSSVFAVLKGAVDAGLNVPHSEEIYPEDYRITGEHIANYAKALKEEDEGKYRKQFSSYLVKGLEPEKLPEHFEEVKARIIEKFEEARE.

This sequence belongs to the universal ribosomal protein uL18 family. In terms of assembly, part of the 50S ribosomal subunit. Contacts the 5S and 23S rRNAs.

Its function is as follows. This is one of the proteins that bind and probably mediate the attachment of the 5S RNA into the large ribosomal subunit, where it forms part of the central protuberance. In Thermococcus onnurineus (strain NA1), this protein is Large ribosomal subunit protein uL18.